A 143-amino-acid chain; its full sequence is Large ribosomal subunit protein uL16 (143 aa).

A compositionally biased stretch (basic residues) spans 1–17 (MLQPKRTKFRKAHKGRI). The tract at residues 1 to 20 (MLQPKRTKFRKAHKGRIHGN) is disordered.

Belongs to the universal ribosomal protein uL16 family. As to quaternary structure, part of the 50S ribosomal subunit.

Functionally, binds 23S rRNA and is also seen to make contacts with the A and possibly P site tRNAs. This Zymomonas mobilis subsp. mobilis (strain ATCC 31821 / ZM4 / CP4) protein is Large ribosomal subunit protein uL16.